A 334-amino-acid chain; its full sequence is H-2 class I histocompatibility antigen, Q7 alpha chain (334 aa).

A signal peptide spans 1–21 (MALTMLLLLVAAALTLIETRA). An alpha-1 region spans residues 22–111 (GQHSLQYFHT…AQSYYNQSKG (90 aa)). The Extracellular portion of the chain corresponds to 22–310 (GQHSLQYFHT…PPYTVSNMAT (289 aa)). Asn107 carries N-linked (GlcNAc...) asparagine glycosylation. The interval 112–203 (GSHTLQWMYG…QLGKETLLRT (92 aa)) is alpha-2. 2 disulfide bridges follow: Cys122–Cys185 and Cys224–Cys280. The alpha-3 stretch occupies residues 204–295 (DPPKAHVTHH…GLPEPLTLRW (92 aa)). The region spanning 206–294 (PKAHVTHHPR…EGLPEPLTLR (89 aa)) is the Ig-like C1-type domain. A glycan (N-linked (GlcNAc...) asparagine) is linked at Asn277. The tract at residues 296–310 (GRWEPPPYTVSNMAT) is connecting peptide. The chain crosses the membrane as a helical span at residues 311–332 (IAVVVDLGAVAIIGAVVAFVMN).

Belongs to the MHC class I family. Heterodimer of an alpha chain and a beta chain (beta-2-microglobulin).

It is found in the membrane. In terms of biological role, involved in the presentation of foreign antigens to the immune system. In Mus musculus (Mouse), this protein is H-2 class I histocompatibility antigen, Q7 alpha chain (H2-Q7).